The chain runs to 452 residues: Imaginal disk growth factor 6 (452 aa).

A signal peptide spans M1 to A18. Positions K29–N452 constitute a GH18 domain. An intrachain disulfide couples C33 to C60. N233 carries N-linked (GlcNAc...) asparagine glycosylation. Cysteines 352 and 435 form a disulfide.

It belongs to the glycosyl hydrolase 18 family. IDGF subfamily. Post-translationally, glycosylated. In larvae, it is expressed in the fat body and by hemocytes.

It localises to the secreted. Its function is as follows. Probably required to stimulate the proliferation, polarization and motility of imaginal disk cells. May act by stabilizing the binding of insulin-like peptides to its receptor through a simultaneous interaction with both molecules to form a multiprotein signaling complex. The protein is Imaginal disk growth factor 6 of Drosophila melanogaster (Fruit fly).